We begin with the raw amino-acid sequence, 1775 residues long: Atrochrysone carboxylic acid synthase (1775 aa).

An N-terminal acylcarrier protein transacylase domain (SAT) region spans residues 29–258 (RSQSKTESGW…QLPVYGGLCH (230 aa)). Residues 391–821 (DSSIAIVGMA…GGNTSLLIEE (431 aa)) enclose the Ketosynthase family 3 (KS3) domain. Residues Cys-564, His-699, and His-740 each act as for beta-ketoacyl synthase activity in the active site. The interval 921–1241 (FVFSGQGSFY…MAQLHNLGVD (321 aa)) is malonyl-CoA:ACP transacylase (MAT) domain. Residues 1305–1626 (TSLVHRLVCE…RSLINTFFSP (322 aa)) are product template (PT) domain. Residues 1309 to 1455 (HRLVCESVQE…WLEEWSPMTH (147 aa)) form an N-terminal hotdog fold region. A PKS/mFAS DH domain is found at 1309–1621 (HRLVCESVQE…FRTFPRSLIN (313 aa)). His-1341 acts as the Proton acceptor; for dehydratase activity in catalysis. A C-terminal hotdog fold region spans residues 1472 to 1621 (TANRLSRDMV…FRTFPRSLIN (150 aa)). The active-site Proton donor; for dehydratase activity is the Asp-1532. A disordered region spans residues 1672–1694 (SRTVMDSSDSSPATTLTPPTLPS). A compositionally biased stretch (low complexity) spans 1677–1689 (DSSDSSPATTLTP). The Carrier domain occupies 1698–1775 (STESPIVHRA…DLKAWLIDYC (78 aa)). Ser-1735 carries the post-translational modification O-(pantetheine 4'-phosphoryl)serine.

In terms of tissue distribution, endocrocin is specifically produced in conidia.

The enzyme catalyses holo-[ACP] + 8 malonyl-CoA + 8 H(+) = atrochrysone carboxyl-[ACP] + 8 CO2 + 8 CoA + 2 H2O. Its pathway is secondary metabolite biosynthesis. Functionally, non-reducing polyketide synthase; part of the gene cluster that mediates the biosynthesis of endocrocin, a simple anthraquinone interesting for many biotechnological applications. The pathway begins with the synthesis of atrochrysone thioester by the polyketide synthase (PKS) encA. The atrochrysone carboxyl ACP thioesterase encB then breaks the thioester bond and releases the atrochrysone carboxylic acid from encA. The atrochrysone carboxylic acid is then converted to endocrocin anthrone which is further oxidized into endocrocin by the anthrone oxygenase encC. The exact function of encD has not been identified yet, but it negatively regulates endocrocin production, likely through the modification of endocrocin itself. In Aspergillus fumigatus (strain ATCC MYA-4609 / CBS 101355 / FGSC A1100 / Af293) (Neosartorya fumigata), this protein is Atrochrysone carboxylic acid synthase.